A 426-amino-acid polypeptide reads, in one-letter code: Gamma-glutamyl phosphate reductase (426 aa).

It belongs to the gamma-glutamyl phosphate reductase family.

It localises to the cytoplasm. It catalyses the reaction L-glutamate 5-semialdehyde + phosphate + NADP(+) = L-glutamyl 5-phosphate + NADPH + H(+). Its pathway is amino-acid biosynthesis; L-proline biosynthesis; L-glutamate 5-semialdehyde from L-glutamate: step 2/2. Its function is as follows. Catalyzes the NADPH-dependent reduction of L-glutamate 5-phosphate into L-glutamate 5-semialdehyde and phosphate. The product spontaneously undergoes cyclization to form 1-pyrroline-5-carboxylate. The protein is Gamma-glutamyl phosphate reductase of Ralstonia nicotianae (strain ATCC BAA-1114 / GMI1000) (Ralstonia solanacearum).